Here is a 297-residue protein sequence, read N- to C-terminus: 4-diphosphocytidyl-2-C-methyl-D-erythritol kinase (297 aa).

Catalysis depends on residues K6 and D144.

Belongs to the GHMP kinase family. IspE subfamily.

The enzyme catalyses 4-CDP-2-C-methyl-D-erythritol + ATP = 4-CDP-2-C-methyl-D-erythritol 2-phosphate + ADP + H(+). Its pathway is isoprenoid biosynthesis; isopentenyl diphosphate biosynthesis via DXP pathway; isopentenyl diphosphate from 1-deoxy-D-xylulose 5-phosphate: step 3/6. Its function is as follows. Catalyzes the phosphorylation of the position 2 hydroxy group of 4-diphosphocytidyl-2C-methyl-D-erythritol. The chain is 4-diphosphocytidyl-2-C-methyl-D-erythritol kinase from Leptospira interrogans serogroup Icterohaemorrhagiae serovar Lai (strain 56601).